The chain runs to 496 residues: Amino-acid acetyltransferase, mitochondrial (496 aa).

The N-acetyltransferase domain occupies 333–493 (YHGTDCLTNG…LDVIDSIQPT (161 aa)).

It belongs to the acetyltransferase family.

The protein localises to the mitochondrion. The enzyme catalyses L-glutamate + acetyl-CoA = N-acetyl-L-glutamate + CoA + H(+). Its pathway is amino-acid biosynthesis; L-arginine biosynthesis; N(2)-acetyl-L-ornithine from L-glutamate: step 1/4. In terms of biological role, N-acetylglutamate synthase involved in arginine biosynthesis. The polypeptide is Amino-acid acetyltransferase, mitochondrial (arg2) (Schizosaccharomyces japonicus (strain yFS275 / FY16936) (Fission yeast)).